We begin with the raw amino-acid sequence, 260 residues long: Type III pantothenate kinase (260 aa).

An ATP-binding site is contributed by D6–V13. G107–R110 is a binding site for substrate. D109 serves as the catalytic Proton acceptor. K(+) is bound at residue D129. ATP is bound at residue T132. Position 184 (T184) interacts with substrate.

This sequence belongs to the type III pantothenate kinase family. In terms of assembly, homodimer. NH4(+) is required as a cofactor. The cofactor is K(+).

The protein localises to the cytoplasm. It catalyses the reaction (R)-pantothenate + ATP = (R)-4'-phosphopantothenate + ADP + H(+). The protein operates within cofactor biosynthesis; coenzyme A biosynthesis; CoA from (R)-pantothenate: step 1/5. Catalyzes the phosphorylation of pantothenate (Pan), the first step in CoA biosynthesis. The sequence is that of Type III pantothenate kinase from Ruegeria sp. (strain TM1040) (Silicibacter sp.).